We begin with the raw amino-acid sequence, 435 residues long: Methylenetetrahydrofolate--tRNA-(uracil-5-)-methyltransferase TrmFO (435 aa).

Gly-9–Gly-14 provides a ligand contact to FAD.

This sequence belongs to the MnmG family. TrmFO subfamily. It depends on FAD as a cofactor.

Its subcellular location is the cytoplasm. It carries out the reaction uridine(54) in tRNA + (6R)-5,10-methylene-5,6,7,8-tetrahydrofolate + NADH + H(+) = 5-methyluridine(54) in tRNA + (6S)-5,6,7,8-tetrahydrofolate + NAD(+). It catalyses the reaction uridine(54) in tRNA + (6R)-5,10-methylene-5,6,7,8-tetrahydrofolate + NADPH + H(+) = 5-methyluridine(54) in tRNA + (6S)-5,6,7,8-tetrahydrofolate + NADP(+). Catalyzes the folate-dependent formation of 5-methyl-uridine at position 54 (M-5-U54) in all tRNAs. The chain is Methylenetetrahydrofolate--tRNA-(uracil-5-)-methyltransferase TrmFO from Enterococcus faecalis (strain ATCC 700802 / V583).